The primary structure comprises 179 residues: Tetratricopeptide repeat protein 36 (179 aa).

TPR repeat units lie at residues 43–76 (SSQLEREAVRLAESMNVTDAIEKFTEAIQVCPLN), 77–110 (PSAYNNRAQAYRLQNSPEKALEDLNESLRLAGPK), and 115–148 (CQAYVQRASIYRLQGDDEKARADFAAAAELGSSF).

This sequence belongs to the TTC36 family.

The protein is Tetratricopeptide repeat protein 36 of Caenorhabditis briggsae.